Consider the following 718-residue polypeptide: Polyribonucleotide nucleotidyltransferase (718 aa).

Positions 496 and 502 each coordinate Mg(2+). Residues 563 to 622 enclose the KH domain; it reads PRLLTIKIDSDMIGLVIGPGGKTIKGITEETGAKIDIEDDGTVTISAVDENKAKRARNII. The S1 motif domain occupies 632–700; it reads GDVYAGRITR…NKGRINLTRL (69 aa).

This sequence belongs to the polyribonucleotide nucleotidyltransferase family. Mg(2+) serves as cofactor.

It localises to the cytoplasm. The enzyme catalyses RNA(n+1) + phosphate = RNA(n) + a ribonucleoside 5'-diphosphate. Involved in mRNA degradation. Catalyzes the phosphorolysis of single-stranded polyribonucleotides processively in the 3'- to 5'-direction. This chain is Polyribonucleotide nucleotidyltransferase, found in Nostoc punctiforme (strain ATCC 29133 / PCC 73102).